A 366-amino-acid polypeptide reads, in one-letter code: Ribosomal RNA large subunit methyltransferase M (366 aa).

S-adenosyl-L-methionine is bound by residues S188, 221 to 224, D240, D260, and D277; that span reads CPGG. K306 functions as the Proton acceptor in the catalytic mechanism.

It belongs to the class I-like SAM-binding methyltransferase superfamily. RNA methyltransferase RlmE family. RlmM subfamily. Monomer.

It is found in the cytoplasm. The catalysed reaction is cytidine(2498) in 23S rRNA + S-adenosyl-L-methionine = 2'-O-methylcytidine(2498) in 23S rRNA + S-adenosyl-L-homocysteine + H(+). In terms of biological role, catalyzes the 2'-O-methylation at nucleotide C2498 in 23S rRNA. The chain is Ribosomal RNA large subunit methyltransferase M from Citrobacter koseri (strain ATCC BAA-895 / CDC 4225-83 / SGSC4696).